Consider the following 503-residue polypeptide: TGF-beta receptor type-1 (503 aa).

Residues 1–29 (MEAAAAAPRRPQLLIVLVAAATLLPGAKA) form the signal peptide. Residues 30–126 (LQCFCHLCTK…QSAGLGPVEL (97 aa)) lie on the Extracellular side of the membrane. Disulfide bonds link Cys-32/Cys-50, Cys-34/Cys-37, Cys-44/Cys-67, Cys-82/Cys-96, and Cys-97/Cys-102. N-linked (GlcNAc...) asparagine glycosylation occurs at Asn-41. The chain crosses the membrane as a helical span at residues 127 to 147 (AAVIAGPVCFVCIALMLMVYI). Topologically, residues 148 to 503 (CHNRTVIHHR…QLSQQEGIKM (356 aa)) are cytoplasmic. A Phosphoserine modification is found at Ser-165. Residues 175–204 (TTLKDLIYDMTTSGSGSGLPLLVQRTIART) enclose the GS domain. A phosphothreonine; by TGFBR2 mark is found at Thr-185 and Thr-186. A phosphoserine; by TGFBR2 mark is found at Ser-187, Ser-189, and Ser-191. Residues 193–194 (LP) carry the FKBP1A-binding motif. Residues 205 to 495 (IVLQESIGKG…LRIKKTLSQL (291 aa)) enclose the Protein kinase domain. ATP-binding positions include 211-219 (IGKGRFGEV) and Lys-232. A Glycyl lysine isopeptide (Lys-Gly) (interchain with G-Cter in ubiquitin) cross-link involves residue Lys-268. Asp-333 functions as the Proton acceptor in the catalytic mechanism. Lys-391 participates in a covalent cross-link: Glycyl lysine isopeptide (Lys-Gly) (interchain with G-Cter in SUMO).

It belongs to the protein kinase superfamily. TKL Ser/Thr protein kinase family. TGFB receptor subfamily. As to quaternary structure, homodimer; in the endoplasmic reticulum but also at the cell membrane. Heterohexamer; TGFB1, TGFB2 and TGFB3 homodimeric ligands assemble a functional receptor composed of two TGFBR1 and TGFBR2 heterodimers to form a ligand-receptor heterohexamer. The respective affinity of TGBRB1 and TGFBR2 for the ligands may modulate the kinetics of assembly of the receptor and may explain the different biological activities of TGFB1, TGFB2 and TGFB3. Component of a complex composed of TSC22D1 (via N-terminus), TGFBR1 and TGFBR2; the interaction between TSC22D1 and TGFBR1 is inhibited by SMAD7 and promoted by TGFB1. Interacts with CD109; inhibits TGF-beta receptor activation in keratinocytes. Interacts with RBPMS. Interacts (unphosphorylated) with FKBP1A; prevents TGFBR1 phosphorylation by TGFBR2 and stabilizes it in the inactive conformation. Interacts with SMAD2, SMAD3 and ZFYVE9; ZFYVE9 recruits SMAD2 and SMAD3 to the TGF-beta receptor. Interacts with TRAF6 and MAP3K7; induces MAP3K7 activation by TRAF6. Interacts with PARD6A; involved in TGF-beta induced epithelial to mesenchymal transition. Interacts with NEDD4L. Interacts with SMAD7, SMURF1 and SMURF2; SMAD7 recruits NEDD4L, SMURF1 and SMURF2 to the TGF-beta receptor. Interacts with USP15 and VPS39. Interacts with SDCBP (via C-terminus). Interacts with CAV1 and this interaction is impaired in the presence of SDCBP. Interacts with APPL1; interaction is TGF beta dependent; mediates trafficking of the TGFBR1 from the endosomes to the nucleus via microtubules in a TRAF6-dependent manner. Interacts with GPR50; this interaction promotes the constitutive activation of SMAD signaling pathway. Mg(2+) serves as cofactor. Requires Mn(2+) as cofactor. In terms of processing, phosphorylated at basal levels in the absence of ligand. Activated upon phosphorylation by TGFBR2, mainly in the GS domain. Phosphorylation in the GS domain abrogates FKBP1A-binding. N-Glycosylated. Post-translationally, ubiquitinated; undergoes ubiquitination catalyzed by several E3 ubiquitin ligases including SMURF1, SMURF2 and NEDD4L2. Results in the proteasomal and/or lysosomal degradation of the receptor thereby negatively regulating its activity. Deubiquitinated by USP15, leading to stabilization of the protein and enhanced TGF-beta signal. Its ubiquitination and proteasome-mediated degradation is negatively regulated by SDCBP. Ubiquitinated by BFAR via'Lys-63'-linked ubiquitination at Lys-268, leading to TGF-beta signaling activation.

The protein localises to the cell membrane. It localises to the cell junction. It is found in the tight junction. The protein resides in the membrane raft. Its subcellular location is the cell surface. The catalysed reaction is L-threonyl-[receptor-protein] + ATP = O-phospho-L-threonyl-[receptor-protein] + ADP + H(+). It carries out the reaction L-seryl-[receptor-protein] + ATP = O-phospho-L-seryl-[receptor-protein] + ADP + H(+). Its activity is regulated as follows. Kept in an inactive conformation by FKBP1A preventing receptor activation in absence of ligand. CD109 is another inhibitor of the receptor. Transmembrane serine/threonine kinase forming with the TGF-beta type II serine/threonine kinase receptor, TGFBR2, the non-promiscuous receptor for the TGF-beta cytokines TGFB1, TGFB2 and TGFB3. Transduces the TGFB1, TGFB2 and TGFB3 signal from the cell surface to the cytoplasm and is thus regulating a plethora of physiological and pathological processes including cell cycle arrest in epithelial and hematopoietic cells, control of mesenchymal cell proliferation and differentiation, wound healing, extracellular matrix production, immunosuppression and carcinogenesis. The formation of the receptor complex composed of 2 TGFBR1 and 2 TGFBR2 molecules symmetrically bound to the cytokine dimer results in the phosphorylation and the activation of TGFBR1 by the constitutively active TGFBR2. Activated TGFBR1 phosphorylates SMAD2 which dissociates from the receptor and interacts with SMAD4. The SMAD2-SMAD4 complex is subsequently translocated to the nucleus where it modulates the transcription of the TGF-beta-regulated genes. This constitutes the canonical SMAD-dependent TGF-beta signaling cascade. Also involved in non-canonical, SMAD-independent TGF-beta signaling pathways. For instance, TGFBR1 induces TRAF6 autoubiquitination which in turn results in MAP3K7 ubiquitination and activation to trigger apoptosis. Also regulates epithelial to mesenchymal transition through a SMAD-independent signaling pathway through PARD6A phosphorylation and activation. This is TGF-beta receptor type-1 (Tgfbr1) from Mus musculus (Mouse).